Reading from the N-terminus, the 144-residue chain is uncharacterized protein (144 aa).

The next 2 helical transmembrane spans lie at 76 to 96 (LLSA…VTML) and 105 to 125 (ILRA…VKSY).

This sequence belongs to the RseC family.

The protein resides in the cell inner membrane. This is an uncharacterized protein from Haemophilus influenzae (strain ATCC 51907 / DSM 11121 / KW20 / Rd).